Consider the following 647-residue polypeptide: Pre-mRNA-splicing factor SLU7 (647 aa).

Residues 1-19 are compositionally biased toward polar residues; the sequence is MASYKQNLPPSALIKQQVN. The disordered stretch occupies residues 1-44; the sequence is MASYKQNLPPSALIKQQVNVADKKSKAEVQRDRQLEEDRKAGTA. Basic and acidic residues predominate over residues 21-41; the sequence is ADKKSKAEVQRDRQLEEDRKA. The CCHC-type zinc-finger motif lies at 113 to 130; that stretch reads GACENCGAMGHQKRDCFD. 2 disordered regions span residues 193–212 and 465–620; these read HEMK…APKD and EVKE…KEME. Residues 465–479 are compositionally biased toward basic and acidic residues; the sequence is EVKEEKEKEDSIKDE. Residues 480–491 are compositionally biased toward acidic residues; the sequence is VAEENSDNDNDE. Positions 513–533 are enriched in basic and acidic residues; it reads EKEREKERLIEKERRERDQRR. Residues 534–555 show a composition bias toward basic residues; sequence RDKKREKRERKKAKLGKRKRRH. The span at 588 to 606 shows a compositional bias: basic and acidic residues; the sequence is EKAEGMKAAREGDRGRKYN.

This sequence belongs to the SLU7 family.

The protein resides in the nucleus. In terms of biological role, participates in the second catalytic step of pre-mRNA splicing, when the free hydroxyl group of exon I attacks the 3'-splice site to generate spliced mRNA and the excised lariat intron. This Caenorhabditis elegans protein is Pre-mRNA-splicing factor SLU7.